The chain runs to 256 residues: Photosystem I chlorophyll a/b-binding protein 5, chloroplastic (256 aa).

The N-terminal 32 residues, 1-32 (MAVVLRGGITGGFLHHRRDASSVITRRISSVK), are a transit peptide targeting the chloroplast. A33 is modified (N-acetylalanine). A chlorophyll b-binding site is contributed by W49. F69 and E88 together coordinate chlorophyll a. A chlorophyll b-binding site is contributed by R93. The next 2 membrane-spanning stretches (helical) occupy residues 94-113 (FAML…TTGI) and 129-146 (FAST…MGFA). E147 and R150 together coordinate chlorophyll b. K205, E206, N209, R211, Q223, and H238 together coordinate chlorophyll a. A helical membrane pass occupies residues 212–232 (LAMMAMLGFFVQASVTHTGPI).

Belongs to the light-harvesting chlorophyll a/b-binding (LHC) protein family. As to quaternary structure, the LHC complex consists of chlorophyll a-b binding proteins. Homodimer. Heterodimer with LHCA2 and, possibly, LHCA3. Can substitute to LHCA4 to form a complex with LHCA1. Binds pigments. Element of the NAD(P)H dehydrogenase-photosystem I supercomplex (NDH-PSI). It depends on Binds at least 14 chlorophylls (8 Chl-a and 6 Chl-b) and carotenoids such as lutein and neoxanthin. as a cofactor. Post-translationally, photoregulated by reversible phosphorylation of its threonine residues.

The protein resides in the plastid. It localises to the chloroplast thylakoid membrane. Its function is as follows. The light-harvesting complex (LHC) functions as a light receptor, it captures and delivers excitation energy to photosystems with which it is closely associated. Seems involved in the function of the photosystem I in low light conditions, when other LHCA proteins are less abundant. Required, together with LHCA6, for the formation of a full-size NAD(P)H dehydrogenase-photosystem I supercomplex (NDH-PSI) that triggers cyclic and chlororespiratory electron transport in chloroplast thylakoids, especially under stress conditions (e.g. increased light intensity). In Arabidopsis thaliana (Mouse-ear cress), this protein is Photosystem I chlorophyll a/b-binding protein 5, chloroplastic.